Reading from the N-terminus, the 458-residue chain is Bifunctional protein GlmU (458 aa).

The interval 1-232 (MISPLSVIIL…TFEIEGVNNR (232 aa)) is pyrophosphorylase. UDP-N-acetyl-alpha-D-glucosamine-binding positions include 10–13 (LAAG), lysine 24, glutamine 79, 84–85 (GT), 106–108 (YGD), glycine 142, glutamate 157, asparagine 172, and asparagine 230. Aspartate 108 provides a ligand contact to Mg(2+). Asparagine 230 lines the Mg(2+) pocket. Positions 233-253 (QQLASLERTWQGKLVADLQEA) are linker. The interval 254–458 (GVQFADPTRV…KDNFQRPTKK (205 aa)) is N-acetyltransferase. The UDP-N-acetyl-alpha-D-glucosamine site is built by arginine 336 and lysine 354. Catalysis depends on histidine 366, which acts as the Proton acceptor. 2 residues coordinate UDP-N-acetyl-alpha-D-glucosamine: tyrosine 369 and asparagine 380. Acetyl-CoA-binding positions include alanine 383, 389–390 (NY), serine 408, alanine 426, and arginine 443.

It in the N-terminal section; belongs to the N-acetylglucosamine-1-phosphate uridyltransferase family. In the C-terminal section; belongs to the transferase hexapeptide repeat family. Homotrimer. Mg(2+) serves as cofactor.

Its subcellular location is the cytoplasm. It catalyses the reaction alpha-D-glucosamine 1-phosphate + acetyl-CoA = N-acetyl-alpha-D-glucosamine 1-phosphate + CoA + H(+). The enzyme catalyses N-acetyl-alpha-D-glucosamine 1-phosphate + UTP + H(+) = UDP-N-acetyl-alpha-D-glucosamine + diphosphate. Its pathway is nucleotide-sugar biosynthesis; UDP-N-acetyl-alpha-D-glucosamine biosynthesis; N-acetyl-alpha-D-glucosamine 1-phosphate from alpha-D-glucosamine 6-phosphate (route II): step 2/2. The protein operates within nucleotide-sugar biosynthesis; UDP-N-acetyl-alpha-D-glucosamine biosynthesis; UDP-N-acetyl-alpha-D-glucosamine from N-acetyl-alpha-D-glucosamine 1-phosphate: step 1/1. It functions in the pathway bacterial outer membrane biogenesis; LPS lipid A biosynthesis. Its function is as follows. Catalyzes the last two sequential reactions in the de novo biosynthetic pathway for UDP-N-acetylglucosamine (UDP-GlcNAc). The C-terminal domain catalyzes the transfer of acetyl group from acetyl coenzyme A to glucosamine-1-phosphate (GlcN-1-P) to produce N-acetylglucosamine-1-phosphate (GlcNAc-1-P), which is converted into UDP-GlcNAc by the transfer of uridine 5-monophosphate (from uridine 5-triphosphate), a reaction catalyzed by the N-terminal domain. The sequence is that of Bifunctional protein GlmU from Psychrobacter arcticus (strain DSM 17307 / VKM B-2377 / 273-4).